Here is a 666-residue protein sequence, read N- to C-terminus: UvrABC system protein B (666 aa).

The 388-residue stretch at 25–412 (EQVQAGAPYQ…EEQIVEQVIR (388 aa)) folds into the Helicase ATP-binding domain. 38–45 (GATGTGKT) provides a ligand contact to ATP. The short motif at 91–114 (YYDYYQPEAYIPVTDTYIAKTASI) is the Beta-hairpin element. The Helicase C-terminal domain occupies 429 to 595 (QVDDLLAEIQ…PIIKRSSNAI (167 aa)). The region spanning 626–661 (PNLITQLEAQMKEAAKNLEFEEAAQYRDRIKKLRER) is the UVR domain.

It belongs to the UvrB family. Forms a heterotetramer with UvrA during the search for lesions. Interacts with UvrC in an incision complex.

The protein localises to the cytoplasm. In terms of biological role, the UvrABC repair system catalyzes the recognition and processing of DNA lesions. A damage recognition complex composed of 2 UvrA and 2 UvrB subunits scans DNA for abnormalities. Upon binding of the UvrA(2)B(2) complex to a putative damaged site, the DNA wraps around one UvrB monomer. DNA wrap is dependent on ATP binding by UvrB and probably causes local melting of the DNA helix, facilitating insertion of UvrB beta-hairpin between the DNA strands. Then UvrB probes one DNA strand for the presence of a lesion. If a lesion is found the UvrA subunits dissociate and the UvrB-DNA preincision complex is formed. This complex is subsequently bound by UvrC and the second UvrB is released. If no lesion is found, the DNA wraps around the other UvrB subunit that will check the other stand for damage. The protein is UvrABC system protein B of Synechococcus sp. (strain ATCC 27144 / PCC 6301 / SAUG 1402/1) (Anacystis nidulans).